We begin with the raw amino-acid sequence, 601 residues long: DNA topoisomerase I, mitochondrial (601 aa).

Residues 1–50 (MRVVRLLRLRAALTLLGEVPRRPASRGVPGSRRTQKGSGARWEKEKHEDG) constitute a mitochondrion transit peptide. The segment at 22-48 (RPASRGVPGSRRTQKGSGARWEKEKHE) is disordered. Interaction with DNA stretches follow at residues 261-262 (KY), 324-329 (RAGNEK), and 421-423 (TAK). The Topo IB-type catalytic domain occupies 268–601 (CSKLKGETAW…LAMAGEDFEF (334 aa)). The active-site O-(3'-phospho-DNA)-tyrosine intermediate is Y559.

This sequence belongs to the type IB topoisomerase family. Ca(2+) is required as a cofactor. Requires Mg(2+) as cofactor.

Its subcellular location is the mitochondrion. The enzyme catalyses ATP-independent breakage of single-stranded DNA, followed by passage and rejoining.. Functionally, releases the supercoiling and torsional tension of DNA introduced during duplication of mitochondrial DNA by transiently cleaving and rejoining one strand of the DNA duplex. Introduces a single-strand break via transesterification at a target site in duplex DNA. The scissile phosphodiester is attacked by the catalytic tyrosine of the enzyme, resulting in the formation of a DNA-(3'-phosphotyrosyl)-enzyme intermediate and the expulsion of a 5'-OH DNA strand. The free DNA strand then rotates around the intact phosphodiester bond on the opposing strand, thus removing DNA supercoils. Finally, in the religation step, the DNA 5'-OH attacks the covalent intermediate to expel the active-site tyrosine and restore the DNA phosphodiester backbone. This Pan troglodytes (Chimpanzee) protein is DNA topoisomerase I, mitochondrial (TOP1MT).